The following is a 396-amino-acid chain: S-adenosylmethionine synthase (396 aa).

Glutamate 11 provides a ligand contact to Mg(2+). ATP is bound at residue histidine 17. Position 45 (glutamate 45) interacts with K(+). 2 residues coordinate L-methionine: glutamate 58 and glutamine 101. ATP-binding positions include 169–171 (DGK), 237–240 (SGRF), aspartate 248, 254–255 (RK), alanine 271, lysine 275, and lysine 279. Aspartate 248 contacts L-methionine. Position 279 (lysine 279) interacts with L-methionine.

The protein belongs to the AdoMet synthase family. In terms of assembly, homotetramer. Mn(2+) is required as a cofactor. It depends on Mg(2+) as a cofactor. Requires Co(2+) as cofactor. K(+) serves as cofactor.

It is found in the cytoplasm. It carries out the reaction L-methionine + ATP + H2O = S-adenosyl-L-methionine + phosphate + diphosphate. It functions in the pathway amino-acid biosynthesis; S-adenosyl-L-methionine biosynthesis; S-adenosyl-L-methionine from L-methionine: step 1/1. In terms of biological role, catalyzes the formation of S-adenosylmethionine from methionine and ATP. The reaction comprises two steps that are both catalyzed by the same enzyme: formation of S-adenosylmethionine (AdoMet) and triphosphate, and subsequent hydrolysis of the triphosphate. The polypeptide is S-adenosylmethionine synthase (SAMS) (Medicago sativa subsp. falcata (Sickle medic)).